The primary structure comprises 450 residues: tRNA modification GTPase MnmE (450 aa).

Residues Lys-21, Glu-78, and Lys-117 each contribute to the (6S)-5-formyl-5,6,7,8-tetrahydrofolate site. Positions 213–376 constitute a TrmE-type G domain; it reads GHALSIIGKP…LSQKISAFFP (164 aa). Asn-223 provides a ligand contact to K(+). GTP contacts are provided by residues 223-228, 242-248, and 267-270; these read NAGKSS, SDIKGTT, and DTAG. Residue Ser-227 coordinates Mg(2+). K(+) contacts are provided by Ser-242, Ile-244, and Thr-247. Residue Thr-248 participates in Mg(2+) binding. Residue Lys-450 participates in (6S)-5-formyl-5,6,7,8-tetrahydrofolate binding.

Belongs to the TRAFAC class TrmE-Era-EngA-EngB-Septin-like GTPase superfamily. TrmE GTPase family. In terms of assembly, homodimer. Heterotetramer of two MnmE and two MnmG subunits. It depends on K(+) as a cofactor.

The protein localises to the cytoplasm. Its function is as follows. Exhibits a very high intrinsic GTPase hydrolysis rate. Involved in the addition of a carboxymethylaminomethyl (cmnm) group at the wobble position (U34) of certain tRNAs, forming tRNA-cmnm(5)s(2)U34. This Helicobacter acinonychis (strain Sheeba) protein is tRNA modification GTPase MnmE.